Consider the following 127-residue polypeptide: UPF0102 protein Glov_2230 (127 aa).

Belongs to the UPF0102 family.

In Trichlorobacter lovleyi (strain ATCC BAA-1151 / DSM 17278 / SZ) (Geobacter lovleyi), this protein is UPF0102 protein Glov_2230.